Here is a 151-residue protein sequence, read N- to C-terminus: FUN14 domain-containing protein 1A (151 aa).

The short motif at 14 to 17 (YEVL) is the YXXL element. The next 3 helical transmembrane spans lie at 44 to 64 (YSVA…GFLF), 71 to 91 (AATA…GGYI), and 130 to 150 (FVKK…LGLA).

Belongs to the FUN14 family.

The protein localises to the mitochondrion outer membrane. Acts as an activator of hypoxia-induced mitophagy, an important mechanism for mitochondrial quality control. This Xenopus laevis (African clawed frog) protein is FUN14 domain-containing protein 1A (fundc1-a).